An 807-amino-acid chain; its full sequence is Glycerol-3-phosphate acyltransferase (807 aa).

The HXXXXD motif motif lies at 308 to 313 (CHRSHM).

Belongs to the GPAT/DAPAT family.

Its subcellular location is the cell inner membrane. The enzyme catalyses sn-glycerol 3-phosphate + an acyl-CoA = a 1-acyl-sn-glycero-3-phosphate + CoA. The protein operates within phospholipid metabolism; CDP-diacylglycerol biosynthesis; CDP-diacylglycerol from sn-glycerol 3-phosphate: step 1/3. This Shewanella loihica (strain ATCC BAA-1088 / PV-4) protein is Glycerol-3-phosphate acyltransferase.